A 362-amino-acid chain; its full sequence is Myricetin 3'/5'-O-methyltransferase 1 (362 aa).

D229 provides a ligand contact to S-adenosyl-L-methionine. The active-site Proton acceptor is the H267.

The protein belongs to the class I-like SAM-binding methyltransferase superfamily. Cation-independent O-methyltransferase family. Homodimer. Mainly expressed in leaves secreting glandular trichomes types 1 and 4 and, to a lesser extent, in storage trichomes type 6.

It carries out the reaction myricetin + S-adenosyl-L-methionine = laricitrin + S-adenosyl-L-homocysteine + H(+). The enzyme catalyses laricitrin + S-adenosyl-L-methionine = syringetin + S-adenosyl-L-homocysteine + H(+). It catalyses the reaction a 3'-hydroxyflavone + S-adenosyl-L-methionine = a 3'-methoxyflavone + S-adenosyl-L-homocysteine + H(+). The catalysed reaction is a 5'-hydroxy-3'-methoxyflavone + S-adenosyl-L-methionine = a 3',5'-dimethoxyflavone + S-adenosyl-L-homocysteine + H(+). It carries out the reaction quercetin + S-adenosyl-L-methionine = isorhamnetin + S-adenosyl-L-homocysteine + H(+). The enzyme catalyses rhamnetin + S-adenosyl-L-methionine = rhamnacene + S-adenosyl-L-homocysteine + H(+). It catalyses the reaction 3',4',5,7-tetrahydroxy-3-methoxyflavone + S-adenosyl-L-methionine = 3,3'-O-dimethylquercetin + S-adenosyl-L-homocysteine + H(+). Its pathway is flavonoid metabolism. Functionally, flavonoid 3'/5'-O-methyltransferase involved in the biosynthesis of polymethoxylated flavonoids natural products such as myricetin derivatives, aroma compounds possessing antioxidant properties and exhibiting pharmacological activities such as anti-carcinogen, anti-viral, anti-thrombotic, anti-diabetic, anti-atherosclerotic, and anti-inflammatory effects. Catalyzes S-adenosylmethionine-dependent regioselective 3'/5'-O-methylation of flavonoids; active on various hydroxylated flavonoid substrates, including myricetin and quercetin, but inactive toward kaempferol. Mediates the formation of 3'-methyl derivatives from quercetin, myricetin, 3-methyl quercetin and 7-methyl quercetin (rhamnetin), producing 3'-methyl quercetin (isorhamnetin), 3'-methyl myricetin (laricitrin), 3,3'-dimethyl quercetin (3-O-methylisorhamnetin) and 7,3'-dimethyl quercetin (7-O-methylisorhamnetin), respectively. Triggers the 5'-O-methylation of 3'-methyl myricetin (laricitrin), thus leading to production of 3',5'-dimethyl myricetin (syringetin). The chain is Myricetin 3'/5'-O-methyltransferase 1 from Solanum habrochaites (Wild tomato).